A 519-amino-acid polypeptide reads, in one-letter code: Sorting nexin-2 (519 aa).

Positions S30 to E50 are enriched in low complexity. Residues S30 to V62 are disordered. S97 is subject to Phosphoserine. Residues T101 and T104 each carry the phosphothreonine modification. A phosphoserine mark is found at S117 and S119. One can recognise a PX domain in the interval F140–R269. A 1,2-diacyl-sn-glycero-3-phospho-(1D-myo-inositol-3-phosphate) is bound by residues R183, S185, K211, and R235. Phosphoserine is present on S185. The segment at Q260–A519 is interaction with RhoG. The residue at position 277 (S277) is a Phosphoserine. The membrane-binding amphipathic helix stretch occupies residues G278 to M295. The BAR domain occupies M299–A519. Position 469 is an N6-acetyllysine (K469).

This sequence belongs to the sorting nexin family. Predominantly forms heterodimers with BAR domain-containing sorting nexins SNX5, SNX6 and SNX32; can self-associate to form homodimers. The heterodimers are proposed to self-assemble into helical arrays on the membrane to stabilize and expand local membrane curvature underlying endosomal tubule formation. Thought to be a component of the originally described retromer complex (also called SNX-BAR retromer) which is a pentamer containing the heterotrimeric retromer cargo-selective complex (CSC), also described as vacuolar protein sorting subcomplex (VPS), and a heterodimeric membrane-deforming subcomplex formed between SNX1 or SNX2 and SNX5 or SNX6 (also called SNX-BAR subcomplex); the respective CSC and SNX-BAR subcomplexes associate with low affinity. Interacts with SNX5, SNX6, SNX32, VPS26A, VPS29, VPS35, FNBP1, KALRN, RHOG (GDP-bound form).

The protein localises to the early endosome membrane. Its subcellular location is the cell projection. It is found in the lamellipodium. In terms of biological role, involved in several stages of intracellular trafficking. Interacts with membranes containing phosphatidylinositol 3-phosphate (PtdIns(3P)) or phosphatidylinositol 3,5-bisphosphate (PtdIns(3,5)P2). Acts in part as component of the retromer membrane-deforming SNX-BAR subcomplex. The SNX-BAR retromer mediates retrograde transport of cargo proteins from endosomes to the trans-Golgi network (TGN) and is involved in endosome-to-plasma membrane transport for cargo protein recycling. The SNX-BAR subcomplex functions to deform the donor membrane into a tubular profile called endosome-to-TGN transport carrier (ETC). Can sense membrane curvature and has in vitro vesicle-to-membrane remodeling activity. Required for retrograde endosome-to-TGN transport of TGN38. Promotes KALRN- and RHOG-dependent but retromer-independent membrane remodeling such as lamellipodium formation; the function is dependent on GEF activity of KALRN. This Mus musculus (Mouse) protein is Sorting nexin-2 (Snx2).